The chain runs to 142 residues: Small ribosomal subunit protein uS12 (142 aa).

It belongs to the universal ribosomal protein uS12 family. As to quaternary structure, part of the 30S ribosomal subunit.

With S4 and S5 plays an important role in translational accuracy. Located at the interface of the 30S and 50S subunits. The polypeptide is Small ribosomal subunit protein uS12 (Methanoculleus marisnigri (strain ATCC 35101 / DSM 1498 / JR1)).